Consider the following 588-residue polypeptide: Proline--tRNA ligase (588 aa).

This sequence belongs to the class-II aminoacyl-tRNA synthetase family. ProS type 1 subfamily. Homodimer.

Its subcellular location is the cytoplasm. The catalysed reaction is tRNA(Pro) + L-proline + ATP = L-prolyl-tRNA(Pro) + AMP + diphosphate. Its function is as follows. Catalyzes the attachment of proline to tRNA(Pro) in a two-step reaction: proline is first activated by ATP to form Pro-AMP and then transferred to the acceptor end of tRNA(Pro). As ProRS can inadvertently accommodate and process non-cognate amino acids such as alanine and cysteine, to avoid such errors it has two additional distinct editing activities against alanine. One activity is designated as 'pretransfer' editing and involves the tRNA(Pro)-independent hydrolysis of activated Ala-AMP. The other activity is designated 'posttransfer' editing and involves deacylation of mischarged Ala-tRNA(Pro). The misacylated Cys-tRNA(Pro) is not edited by ProRS. This is Proline--tRNA ligase from Corynebacterium glutamicum (strain ATCC 13032 / DSM 20300 / JCM 1318 / BCRC 11384 / CCUG 27702 / LMG 3730 / NBRC 12168 / NCIMB 10025 / NRRL B-2784 / 534).